Here is a 156-residue protein sequence, read N- to C-terminus: MATKSDPNYKIIAENRRARFDYFIESDLEVGIVLTGSEVKSLRTGQSNIAESYASVENGELWLINAYIAAYKQAGVFGHEERRRRKLLVSRKELARLWQAIGREGMTLVPLVMYFNDRGKVKLKIGVAKGKKVADKRETAAKRDWNRQKQRLLKQG.

Belongs to the SmpB family.

Its subcellular location is the cytoplasm. Required for rescue of stalled ribosomes mediated by trans-translation. Binds to transfer-messenger RNA (tmRNA), required for stable association of tmRNA with ribosomes. tmRNA and SmpB together mimic tRNA shape, replacing the anticodon stem-loop with SmpB. tmRNA is encoded by the ssrA gene; the 2 termini fold to resemble tRNA(Ala) and it encodes a 'tag peptide', a short internal open reading frame. During trans-translation Ala-aminoacylated tmRNA acts like a tRNA, entering the A-site of stalled ribosomes, displacing the stalled mRNA. The ribosome then switches to translate the ORF on the tmRNA; the nascent peptide is terminated with the 'tag peptide' encoded by the tmRNA and targeted for degradation. The ribosome is freed to recommence translation, which seems to be the essential function of trans-translation. The sequence is that of SsrA-binding protein from Paracoccus denitrificans (strain Pd 1222).